The chain runs to 511 residues: Coatomer subunit delta (511 aa).

Basic and acidic residues predominate over residues 168–177; sequence QARRDAERQG. The segment at 168–196 is disordered; sequence QARRDAERQGKKAPGFGGFGSSTVSGGST. The residue at position 223 (Ser223) is a Phosphoserine. N6-acetyllysine is present on residues Lys233 and Lys241. The residue at position 244 (Ser244) is a Phosphoserine. An MHD domain is found at 271–511; sequence MESVHMKIEE…TFLVDKYEIL (241 aa). 2 positions are modified to N6-acetyllysine: Lys309 and Lys351. Ser493 is subject to Phosphoserine.

Belongs to the adaptor complexes medium subunit family. Delta-COP subfamily. In terms of assembly, oligomeric complex that consists of at least the alpha, beta, beta', gamma, delta, epsilon and zeta subunits. In terms of tissue distribution, ubiquitously expressed.

The protein localises to the cytoplasm. It localises to the golgi apparatus membrane. The protein resides in the cytoplasmic vesicle. Its subcellular location is the COPI-coated vesicle membrane. In terms of biological role, the coatomer is a cytosolic protein complex that binds to dilysine motifs and reversibly associates with Golgi non-clathrin-coated vesicles, which further mediate biosynthetic protein transport from the ER, via the Golgi up to the trans Golgi network. Coatomer complex is required for budding from Golgi membranes, and is essential for the retrograde Golgi-to-ER transport of dilysine-tagged proteins. In mammals, the coatomer can only be recruited by membranes associated to ADP-ribosylation factors (ARFs), which are small GTP-binding proteins; the complex also influences the Golgi structural integrity, as well as the processing, activity, and endocytic recycling of LDL receptors. The chain is Coatomer subunit delta (ARCN1) from Bos taurus (Bovine).